Consider the following 846-residue polypeptide: Choline trimethylamine-lyase (846 aa).

The PFL domain maps to Pro60–Arg718. Catalysis depends on Cys489, which acts as the Cysteine radical intermediate. Glu491 (proton acceptor) is an active-site residue. Positions Asp725 to Phe846 constitute a Glycine radical domain. Residue Gly821 is modified to Glycine radical.

It belongs to the glycyl radical enzyme (GRE) family. CutC subfamily. As to quaternary structure, homodimer. Post-translationally, requires the activating protein CutD to generate the key active site glycyl radical on Gly-821 that is involved in catalysis.

The catalysed reaction is choline = trimethylamine + acetaldehyde. The protein operates within amine and polyamine metabolism; choline degradation. Its function is as follows. Glycine radical enzyme that catalyzes the cleavage of a C-N bond in choline, producing trimethylamine (TMA) and acetaldehyde. Is involved in the anaerobic choline utilization pathway that allows D.alaskensis to grow on choline as a source of carbon and energy. Is strictly specific for choline as substrate. The chain is Choline trimethylamine-lyase from Oleidesulfovibrio alaskensis (strain ATCC BAA-1058 / DSM 17464 / G20) (Desulfovibrio alaskensis).